Reading from the N-terminus, the 477-residue chain is tRNA-2-methylthio-N(6)-dimethylallyladenosine synthase (477 aa).

In terms of domain architecture, MTTase N-terminal spans 3–120 (KKLFIKTWGC…LPEMINQIKG (118 aa)). Positions 12, 49, 83, 157, 161, and 164 each coordinate [4Fe-4S] cluster. The region spanning 143–375 (KAEGPTAFVS…QNRITQQALR (233 aa)) is the Radical SAM core domain. One can recognise a TRAM domain in the interval 378–441 (RNMIDSEQRV…ANSLRGDVLR (64 aa)).

It belongs to the methylthiotransferase family. MiaB subfamily. In terms of assembly, monomer. [4Fe-4S] cluster is required as a cofactor.

It is found in the cytoplasm. It carries out the reaction N(6)-dimethylallyladenosine(37) in tRNA + (sulfur carrier)-SH + AH2 + 2 S-adenosyl-L-methionine = 2-methylsulfanyl-N(6)-dimethylallyladenosine(37) in tRNA + (sulfur carrier)-H + 5'-deoxyadenosine + L-methionine + A + S-adenosyl-L-homocysteine + 2 H(+). Its function is as follows. Catalyzes the methylthiolation of N6-(dimethylallyl)adenosine (i(6)A), leading to the formation of 2-methylthio-N6-(dimethylallyl)adenosine (ms(2)i(6)A) at position 37 in tRNAs that read codons beginning with uridine. This Pseudoalteromonas atlantica (strain T6c / ATCC BAA-1087) protein is tRNA-2-methylthio-N(6)-dimethylallyladenosine synthase.